The following is a 235-amino-acid chain: Intron-encoded endonuclease I-SceI (235 aa).

The protein belongs to the LAGLIDADG endonuclease family. Monomer. It depends on Mg(2+) as a cofactor.

The protein resides in the mitochondrion. Mitochondrial DNA endonuclease involved in intron homing. It introduces a specific double-strand break in the DNA of the 21S rRNA gene and thus mediates the insertion of an intron, containing its own coding sequence (group I intron), into an intronless gene. Specifically recognizes and cleaves the sequence 5'-TAGGGATAACAGGGTAAT-3'. The protein is Intron-encoded endonuclease I-SceI (SCEI) of Saccharomyces cerevisiae (strain ATCC 204508 / S288c) (Baker's yeast).